The chain runs to 304 residues: D-alanine--D-alanine ligase (304 aa).

An ATP-grasp domain is found at 100-301 (KLVALQSGIP…FGEFLEDLIK (202 aa)). ATP is bound at residue 129–184 (ERKLGSPFIVKPCDVGSTIGLSLVRSASEYEVALEEAFRFSDRLLLEEFIDGFEVT). The Mg(2+) site is built by Asp256, Glu268, and Asn270.

The protein belongs to the D-alanine--D-alanine ligase family. Requires Mg(2+) as cofactor. Mn(2+) serves as cofactor.

It is found in the cytoplasm. The catalysed reaction is 2 D-alanine + ATP = D-alanyl-D-alanine + ADP + phosphate + H(+). It functions in the pathway cell wall biogenesis; peptidoglycan biosynthesis. Its function is as follows. Cell wall formation. The sequence is that of D-alanine--D-alanine ligase from Coprothermobacter proteolyticus (strain ATCC 35245 / DSM 5265 / OCM 4 / BT).